The primary structure comprises 237 residues: Uridylate kinase (237 aa).

Residue 9–12 (KLSG) participates in ATP binding. Gly51 provides a ligand contact to UMP. Gly52 and Arg56 together coordinate ATP. Residues Asp71 and 132-139 (CGNPFFTT) each bind UMP. Residues Thr159, Tyr165, and Asp168 each coordinate ATP.

The protein belongs to the UMP kinase family. Homohexamer.

The protein resides in the cytoplasm. The enzyme catalyses UMP + ATP = UDP + ADP. It functions in the pathway pyrimidine metabolism; CTP biosynthesis via de novo pathway; UDP from UMP (UMPK route): step 1/1. With respect to regulation, inhibited by UTP. Functionally, catalyzes the reversible phosphorylation of UMP to UDP. The polypeptide is Uridylate kinase (Prochlorococcus marinus (strain MIT 9303)).